Reading from the N-terminus, the 193-residue chain is 3-isopropylmalate dehydratase small subunit (193 aa).

This sequence belongs to the LeuD family. LeuD type 1 subfamily. As to quaternary structure, heterodimer of LeuC and LeuD.

The enzyme catalyses (2R,3S)-3-isopropylmalate = (2S)-2-isopropylmalate. It functions in the pathway amino-acid biosynthesis; L-leucine biosynthesis; L-leucine from 3-methyl-2-oxobutanoate: step 2/4. Functionally, catalyzes the isomerization between 2-isopropylmalate and 3-isopropylmalate, via the formation of 2-isopropylmaleate. The chain is 3-isopropylmalate dehydratase small subunit from Bacillus cereus (strain AH820).